Consider the following 792-residue polypeptide: Cis-abienol synthase, chloroplastic (792 aa).

Residues 1-37 (MVLGLRSKIIPLPDHKLGNIKLGSVTNAICHRPCRVR) constitute a chloroplast transit peptide. 4 residues coordinate Mg(2+): aspartate 539, aspartate 543, asparagine 684, and glutamate 692. The DDXXD motif motif lies at 539 to 543 (DDFFD).

It belongs to the terpene synthase family. The cofactor is Mg(2+). Expressed specifically in trichomes.

It is found in the plastid. The protein localises to the chloroplast. It carries out the reaction 8-hydroxycopalyl diphosphate = cis-abienol + diphosphate. It participates in secondary metabolite biosynthesis; terpenoid biosynthesis. Its function is as follows. Involved in the biosynthesis of cis-abienol, a labdane diterpene that can be used as synthesis precursor of ambergris substitution fragance products. The polypeptide is Cis-abienol synthase, chloroplastic (Nicotiana tabacum (Common tobacco)).